We begin with the raw amino-acid sequence, 496 residues long: Solute carrier family 2, facilitated glucose transporter member 3 (496 aa).

Residues 1–11 (MADKKKITASL) are Cytoplasmic-facing. The helical transmembrane segment at 12–33 (IYAVSVAAIGSLQFGYNTGVIN) threads the bilayer. The Extracellular portion of the chain corresponds to 34–65 (APEKIIQAFYNRTLSQRSGETISPELLTSLWS). Residue Asn-44 is glycosylated (N-linked (GlcNAc...) asparagine). A helical transmembrane segment spans residues 66–86 (LSVAIFSVGGMIGSFSVSLFF). Residues 87 to 91 (NRFGR) are Cytoplasmic-facing. Residues 92 to 112 (RNSMLLVNVLAFAGGALMALS) traverse the membrane as a helical segment. Residues 113–119 (KIAKAVE) lie on the Extracellular side of the membrane. The chain crosses the membrane as a helical span at residues 120–143 (MLIIGRFIIGLFCGLCTGFVPMYI). The Cytoplasmic portion of the chain corresponds to 144–154 (SEVSPTSLRGA). Residues 155-175 (FGTLNQLGIVVGILVAQIFGL) form a helical membrane-spanning segment. Gln-160 contributes to the D-glucose binding site. Residues 176 to 184 (EGIMGTEAL) are Extracellular-facing. The chain crosses the membrane as a helical span at residues 185–205 (WPLLLGFTIVPAVLQCVALLF). Residues 206 to 270 (CPESPRFLLI…LFRSPNYRQP (65 aa)) are Cytoplasmic-facing. The helical transmembrane segment at 271–291 (IIISITLQLSQQLSGINAVFY) threads the bilayer. The interval 278-280 (QLS) is important for selectivity against fructose. D-glucose is bound by residues 281 to 282 (QQ) and Asn-287. The Extracellular segment spans residues 292–305 (YSTGIFERAGITQP). Residues 306–326 (VYATIGAGVVNTVFTVVSLFL) traverse the membrane as a helical segment. Asn-316 is a D-glucose binding site. Over 327-332 (VERAGR) the chain is Cytoplasmic. A helical transmembrane segment spans residues 333 to 353 (RTLHLVGLGGMAVCAAVMTIA). The Extracellular portion of the chain corresponds to 354 to 362 (LALKEKWIR). Residues 363-388 (YISIVATFGFVALFEIGPGPIPWFIV) form a helical membrane-spanning segment. Residues Glu-377 and Trp-385 each contribute to the D-glucose site. Topologically, residues 389–398 (AELFSQGPRP) are cytoplasmic. A helical transmembrane segment spans residues 399 to 419 (AAMAVAGCSNWTSNFLVGMLF). Over 420–428 (PYAEKLCGP) the chain is Extracellular. The chain crosses the membrane as a helical span at residues 429-449 (YVFLIFLVFLLIFFIFTYFKV). Over 450–496 (PETKGRTFEDISRGFEEQVETSSPSSPPIEKNPMVEMNSIEPDKEVA) the chain is Cytoplasmic. Residues 464–496 (FEEQVETSSPSSPPIEKNPMVEMNSIEPDKEVA) form a disordered region.

This sequence belongs to the major facilitator superfamily. Sugar transporter (TC 2.A.1.1) family. Glucose transporter subfamily.

The protein localises to the cell membrane. It localises to the perikaryon. The protein resides in the cell projection. The catalysed reaction is D-glucose(out) = D-glucose(in). The enzyme catalyses D-galactose(in) = D-galactose(out). Its activity is regulated as follows. Deoxyglucose transport is inhibited by D-glucose, D-galactose and maltose. Galactose transport is inhibited by D-glucose and maltose. Its function is as follows. Facilitative glucose transporter. Can also mediate the uptake of various other monosaccharides across the cell membrane. Mediates the uptake of glucose, 2-deoxyglucose, galactose, mannose, xylose and fucose, and probably also dehydroascorbate. Does not mediate fructose transport. Required for mesendoderm differentiation. The sequence is that of Solute carrier family 2, facilitated glucose transporter member 3 from Gallus gallus (Chicken).